Here is a 951-residue protein sequence, read N- to C-terminus: MRGRGNARSSQALGVSWCPATWHPRLDMGRLHRPRSSTSYRNLPHLFLFFLFVGPFSCLGSYSRATELLYSLNEGLPAGVLIGSLAEDLRLLPRSAGRPDPQSQLPERTGAEWNPPLSFSLASRGLSGQYVTLDNRSGELHTSAQEIDREALCVEGGGGTAWSGSVSISSSPSDSCLLLLDVLVLPQEYFRFVKVKIAIRDINDNAPQFPVSQISVWVPENAPVNTRLAIEHPAVDPDVGINGVQTYRLLDYHGMFTLDVEENENGERTPYLIVMGALDRETQDQYVSIIIAEDGGSPPLLGSATLTIGISDINDNCPLFTDSQINVTVYGNATVGTPIAAVQAVDKDLGTNAQITYSYSQKVPQASKDLFHLDENTGVIKLFSKIGGSVLESHKLTILANGPGCIPAVITALVSIIKVIFRPPEIVPRYIANEIDGVVYLKELEPVNTPIAFFTIRDPEGKYKVNCYLDGEGPFRLSPYKPYNNEYLLETTKPMDYELQQFYEVAVVAWNSEGFHVKRVIKVQLLDDNDNAPIFLQPLIELTIEENNSPNAFLTKLYATDADSEERGQVSYFLGPDAPSYFSLDSVTGILTVSTQLDREEKEKYRYTVRAVDCGKPPRESVATVALTVLDKNDNSPRFINKDFSFFVPENFPGYGEIGVISVTDADAGRNGWVALSVVNQSDIFVIDTGKGMLRAKVSLDREQQSSYTLWVEAVDGGEPALSSTAKITILLLDINDNPPLVLFPQSNMSYLLVLPSTLPGSPVTEVYAVDKDTGMNAVIAYSIIGRRGPRPESFRIDPKTGNITLEEALLQTDYGLHRLLVKVSDHGYPEPLHSTVMVNLFVNDTVSNESYIESLLRKEPEINIEEKEPQISIEPTHRKVESVSCMPTLVALSVISLGSITLVTGMGIYICLRKGEKHPREDENLEVQIPLKGKIDLHMRERKPMDISNI.

The first 60 residues, 1–60 (MRGRGNARSSQALGVSWCPATWHPRLDMGRLHRPRSSTSYRNLPHLFLFFLFVGPFSCLG), serve as a signal peptide directing secretion. At 61-890 (SYSRATELLY…VESVSCMPTL (830 aa)) the chain is on the extracellular side. 6 consecutive Cadherin domains span residues 64–209 (RATE…APQF), 210–320 (PVSQ…CPLF), 321–535 (TDSQ…APIF), 536–639 (LQPL…SPRF), 640–742 (INKD…PPLV), and 746–863 (QSNM…EPEI). A glycan (N-linked (GlcNAc...) asparagine) is linked at asparagine 135. Asparagine 326 and asparagine 332 each carry an N-linked (GlcNAc...) asparagine glycan. N-linked (GlcNAc...) asparagine glycans are attached at residues asparagine 680, asparagine 748, asparagine 803, asparagine 844, and asparagine 849. Residues 891–911 (VALSVISLGSITLVTGMGIYI) form a helical membrane-spanning segment. At 912 to 951 (CLRKGEKHPREDENLEVQIPLKGKIDLHMRERKPMDISNI) the chain is on the cytoplasmic side.

It is found in the cell membrane. In terms of biological role, potential calcium-dependent cell-adhesion protein. The chain is Protocadherin-20 (PCDH20) from Homo sapiens (Human).